A 348-amino-acid polypeptide reads, in one-letter code: Ketol-acid reductoisomerase (NADP(+)) (348 aa).

The KARI N-terminal Rossmann domain maps to 1–179 (MDVHYDADPA…GGTHAGVIET (179 aa)). NADP(+)-binding positions include 22 to 25 (YGSQ), R45, S48, S50, and 80 to 83 (DQHQ). H105 is an active-site residue. G131 contacts NADP(+). The 146-residue stretch at 180–325 (TFKDETETDL…QTLRGMMPWL (146 aa)) folds into the KARI C-terminal knotted domain. The Mg(2+) site is built by D188, E192, E224, and E228. S249 is a substrate binding site. The segment at 323 to 348 (PWLNGDETSADEDAPDAADTAPASSS) is disordered. Residues 339-348 (AADTAPASSS) show a composition bias toward low complexity.

Belongs to the ketol-acid reductoisomerase family. The cofactor is Mg(2+).

It carries out the reaction (2R)-2,3-dihydroxy-3-methylbutanoate + NADP(+) = (2S)-2-acetolactate + NADPH + H(+). The catalysed reaction is (2R,3R)-2,3-dihydroxy-3-methylpentanoate + NADP(+) = (S)-2-ethyl-2-hydroxy-3-oxobutanoate + NADPH + H(+). It functions in the pathway amino-acid biosynthesis; L-isoleucine biosynthesis; L-isoleucine from 2-oxobutanoate: step 2/4. It participates in amino-acid biosynthesis; L-valine biosynthesis; L-valine from pyruvate: step 2/4. In terms of biological role, involved in the biosynthesis of branched-chain amino acids (BCAA). Catalyzes an alkyl-migration followed by a ketol-acid reduction of (S)-2-acetolactate (S2AL) to yield (R)-2,3-dihydroxy-isovalerate. In the isomerase reaction, S2AL is rearranged via a Mg-dependent methyl migration to produce 3-hydroxy-3-methyl-2-ketobutyrate (HMKB). In the reductase reaction, this 2-ketoacid undergoes a metal-dependent reduction by NADPH to yield (R)-2,3-dihydroxy-isovalerate. The sequence is that of Ketol-acid reductoisomerase (NADP(+)) from Salinibacter ruber (strain DSM 13855 / M31).